Here is a 222-residue protein sequence, read N- to C-terminus: 2-hydroxy-3-keto-5-methylthiopentenyl-1-phosphate phosphatase (222 aa).

It belongs to the HAD-like hydrolase superfamily. MtnX family.

The enzyme catalyses 2-hydroxy-5-methylsulfanyl-3-oxopent-1-enyl phosphate + H2O = 1,2-dihydroxy-5-(methylsulfanyl)pent-1-en-3-one + phosphate. It functions in the pathway amino-acid biosynthesis; L-methionine biosynthesis via salvage pathway; L-methionine from S-methyl-5-thio-alpha-D-ribose 1-phosphate: step 4/6. In terms of biological role, dephosphorylates 2-hydroxy-3-keto-5-methylthiopentenyl-1-phosphate (HK-MTPenyl-1-P) yielding 1,2-dihydroxy-3-keto-5-methylthiopentene (DHK-MTPene). In Brevibacillus brevis (strain 47 / JCM 6285 / NBRC 100599), this protein is 2-hydroxy-3-keto-5-methylthiopentenyl-1-phosphate phosphatase.